The chain runs to 231 residues: Probable cell wall protein ARB_06477 (231 aa).

The signal sequence occupies residues 1–17; the sequence is MRSVLYLLFTAVAAVAA. Positions 107 to 206 are disordered; it reads TPSFMVDGAT…TGMPTSSGAP (100 aa). Over residues 121–204 the composition is skewed to low complexity; that stretch reads TGPTTSRTSM…SSTGMPTSSG (84 aa). The GPI-anchor amidated serine moiety is linked to residue Ser203. A propeptide spans 204–231 (removed in mature form); the sequence is GAPDPNGAVSLALPGGLLSIVLSLMALL.

Belongs to the SRP1/TIP1 family. Post-translationally, the GPI-anchor is attached to the protein in the endoplasmic reticulum and serves to target the protein to the cell surface. There, the glucosamine-inositol phospholipid moiety is cleaved off and the GPI-modified mannoprotein is covalently attached via its lipidless GPI glycan remnant to the 1,6-beta-glucan of the outer cell wall layer.

It is found in the cell membrane. It localises to the secreted. Its subcellular location is the cell wall. In terms of biological role, probable component of the cell wall. The chain is Probable cell wall protein ARB_06477 from Arthroderma benhamiae (strain ATCC MYA-4681 / CBS 112371) (Trichophyton mentagrophytes).